A 121-amino-acid polypeptide reads, in one-letter code: Large ribosomal subunit protein uL22 (121 aa).

The protein belongs to the universal ribosomal protein uL22 family. In terms of assembly, part of the 50S ribosomal subunit.

Functionally, this protein binds specifically to 23S rRNA; its binding is stimulated by other ribosomal proteins, e.g. L4, L17, and L20. It is important during the early stages of 50S assembly. It makes multiple contacts with different domains of the 23S rRNA in the assembled 50S subunit and ribosome. The globular domain of the protein is located near the polypeptide exit tunnel on the outside of the subunit, while an extended beta-hairpin is found that lines the wall of the exit tunnel in the center of the 70S ribosome. The protein is Large ribosomal subunit protein uL22 of Beutenbergia cavernae (strain ATCC BAA-8 / DSM 12333 / CCUG 43141 / JCM 11478 / NBRC 16432 / NCIMB 13614 / HKI 0122).